Here is a 377-residue protein sequence, read N- to C-terminus: Chaperone protein DnaJ (377 aa).

In terms of domain architecture, J spans 5–70 (DYYEILGVAK…QKRAAYDQFG (66 aa)). Residues 130–208 (GTEVKIRVPS…CHGQGRVEEH (79 aa)) form a CR-type zinc finger. Zn(2+)-binding residues include Cys-143, Cys-146, Cys-160, Cys-163, Cys-182, Cys-185, Cys-196, and Cys-199. CXXCXGXG motif repeat units lie at residues 143–150 (CGECHGSG), 160–167 (CGTCGGVG), 182–189 (CPRCHGTG), and 196–203 (CKACHGQG).

It belongs to the DnaJ family. In terms of assembly, homodimer. It depends on Zn(2+) as a cofactor.

It localises to the cytoplasm. Functionally, participates actively in the response to hyperosmotic and heat shock by preventing the aggregation of stress-denatured proteins and by disaggregating proteins, also in an autonomous, DnaK-independent fashion. Unfolded proteins bind initially to DnaJ; upon interaction with the DnaJ-bound protein, DnaK hydrolyzes its bound ATP, resulting in the formation of a stable complex. GrpE releases ADP from DnaK; ATP binding to DnaK triggers the release of the substrate protein, thus completing the reaction cycle. Several rounds of ATP-dependent interactions between DnaJ, DnaK and GrpE are required for fully efficient folding. Also involved, together with DnaK and GrpE, in the DNA replication of plasmids through activation of initiation proteins. The protein is Chaperone protein DnaJ of Thioalkalivibrio sulfidiphilus (strain HL-EbGR7).